The sequence spans 342 residues: 6-hydroxytryprostatin B O-methyltransferase (342 aa).

Residue D201 participates in S-adenosyl-L-methionine binding. H244 functions as the Proton acceptor in the catalytic mechanism.

Belongs to the class I-like SAM-binding methyltransferase superfamily. Cation-independent O-methyltransferase family. In terms of assembly, homodimer.

It catalyses the reaction 6-hydroxytryprostatin B + S-adenosyl-L-methionine = tryprostatin A + S-adenosyl-L-homocysteine + H(+). The protein operates within mycotoxin biosynthesis. Functionally, 6-hydroxytryprostatin B O-methyltransferase; part of the gene cluster that mediates the biosynthesis of fumitremorgins, indole alkaloids that carry not only intriguing chemical structures, but also interesting biological and pharmacological activities. The biosynthesis of fumitremorgin-type alkaloids begins by condensation of the two amino acids L-tryptophan and L-proline to brevianamide F, catalyzed by the non-ribosomal peptide synthetase ftmA. Brevianamide F is then prenylated by the prenyltransferase ftmPT1/ftmB in the presence of dimethylallyl diphosphate, resulting in the formation of tryprostatin B. The three cytochrome P450 monooxygenases, ftmP450-1/ftmC, ftmP450-2/ftmE and ftmP450-3/FtmG, are responsible for the conversion of tryprostatin B to 6-hydroxytryprostatin B, tryprostatin A to fumitremorgin C and fumitremorgin C to 12,13-dihydroxyfumitremorgin C, respectively. The putative methyltransferase ftmMT/ftmD is expected for the conversion of 6-hydroxytryprostatin B to tryprostatin A. FtmPT2/FtmH catalyzes the prenylation of 12,13-dihydroxyfumitre-morgin C in the presence of dimethylallyl diphosphate, resulting in the formation of fumitremorgin B. Fumitremorgin B is further converted to verruculogen by ftmOx1/ftmF via the insertion of an endoperoxide bond between the two prenyl moieties. In some fungal species, verruculogen is further converted to fumitremorgin A, but the enzymes involved in this step have not been identified yet. This Aspergillus fumigatus (strain ATCC MYA-4609 / CBS 101355 / FGSC A1100 / Af293) (Neosartorya fumigata) protein is 6-hydroxytryprostatin B O-methyltransferase.